The sequence spans 228 residues: 2,3-bisphosphoglycerate-dependent phosphoglycerate mutase (228 aa).

Substrate contacts are provided by residues 8–15 (RHGLSEWN), 21–22 (TG), R60, 87–90 (ERHY), K98, 114–115 (RR), and 183–184 (GN). H9 serves as the catalytic Tele-phosphohistidine intermediate. Catalysis depends on E87, which acts as the Proton donor/acceptor.

Belongs to the phosphoglycerate mutase family. BPG-dependent PGAM subfamily.

The enzyme catalyses (2R)-2-phosphoglycerate = (2R)-3-phosphoglycerate. It participates in carbohydrate degradation; glycolysis; pyruvate from D-glyceraldehyde 3-phosphate: step 3/5. Its function is as follows. Catalyzes the interconversion of 2-phosphoglycerate and 3-phosphoglycerate. This is 2,3-bisphosphoglycerate-dependent phosphoglycerate mutase from Enterococcus faecalis (strain ATCC 700802 / V583).